The following is a 440-amino-acid chain: Chromosome partition protein MukF (440 aa).

Residues 208–236 (LDETSGNLRELQDTLNAAGDKLQSQLLRI) form a leucine-zipper region.

This sequence belongs to the MukF family. In terms of assembly, interacts, and probably forms a ternary complex, with MukE and MukB via its C-terminal region. The complex formation is stimulated by calcium or magnesium. It is required for an interaction between MukE and MukB.

Its subcellular location is the cytoplasm. The protein localises to the nucleoid. Involved in chromosome condensation, segregation and cell cycle progression. May participate in facilitating chromosome segregation by condensation DNA from both sides of a centrally located replisome during cell division. Not required for mini-F plasmid partitioning. Probably acts via its interaction with MukB and MukE. Overexpression results in anucleate cells. It has a calcium binding activity. This is Chromosome partition protein MukF from Histophilus somni (strain 129Pt) (Haemophilus somnus).